Here is a 692-residue protein sequence, read N- to C-terminus: Elongation factor G (692 aa).

In terms of domain architecture, tr-type G spans 8–282; sequence KDTRNIGIMA…AVLDYLPSPL (275 aa). GTP is bound by residues 17 to 24, 81 to 85, and 135 to 138; these read AHIDAGKT, DTPGH, and NKMD.

Belongs to the TRAFAC class translation factor GTPase superfamily. Classic translation factor GTPase family. EF-G/EF-2 subfamily.

It localises to the cytoplasm. Functionally, catalyzes the GTP-dependent ribosomal translocation step during translation elongation. During this step, the ribosome changes from the pre-translocational (PRE) to the post-translocational (POST) state as the newly formed A-site-bound peptidyl-tRNA and P-site-bound deacylated tRNA move to the P and E sites, respectively. Catalyzes the coordinated movement of the two tRNA molecules, the mRNA and conformational changes in the ribosome. In Shouchella clausii (strain KSM-K16) (Alkalihalobacillus clausii), this protein is Elongation factor G.